The chain runs to 89 residues: MAHKKAGGSSRNGRDSESKRLGVKKFGGEAVLAGNIIVRQRGTKWHPGANVGLGKDHTIFATVNGSVSFRTKANGRTYVSVNPIAEAAE.

The interval 1-22 (MAHKKAGGSSRNGRDSESKRLG) is disordered.

The protein belongs to the bacterial ribosomal protein bL27 family.

The sequence is that of Large ribosomal subunit protein bL27 from Brucella abortus (strain S19).